Consider the following 160-residue polypeptide: M-phase phosphoprotein 6 (160 aa).

Glycyl lysine isopeptide (Lys-Gly) (interchain with G-Cter in SUMO2) cross-links involve residues K37 and K86. Phosphoserine is present on S110. The Nuclear localization signal motif lies at R116–R133. A Glycyl lysine isopeptide (Lys-Gly) (interchain with G-Cter in SUMO2) cross-link involves residue K127. At T147 the chain carries Phosphothreonine. Glycyl lysine isopeptide (Lys-Gly) (interchain with G-Cter in SUMO2) cross-links involve residues K150 and K153.

This sequence belongs to the MPP6 family. As to quaternary structure, associates with the RNA exosome complex, mediated by EXOSC3. Interacts with ARHGAP18. Interacts with exosome cofactors EXOSC10 and MTREX. Phosphorylated in M (mitotic) phase.

It localises to the nucleus. The protein resides in the nucleolus. It is found in the cytoplasm. Functionally, RNA-binding protein that associates with the RNA exosome complex. Involved in the 3'-processing of the 7S pre-RNA to the mature 5.8S rRNA and play a role in recruiting the RNA exosome complex to pre-rRNA; this function may include C1D. In Homo sapiens (Human), this protein is M-phase phosphoprotein 6.